Reading from the N-terminus, the 547-residue chain is Cilia- and flagella- associated protein 210 (547 aa).

Coiled-coil stretches lie at residues 50-131, 183-251, and 342-405; these read ERIR…RKKA, VKLN…MKKN, and IARD…KADK. Positions 214-237 are disordered; the sequence is KQIEEHKEEEEARKKSEEKDAEEM.

Microtubule inner protein component of sperm flagellar doublet microtubules.

The protein resides in the cytoplasm. Its subcellular location is the cytoskeleton. It is found in the cilium axoneme. It localises to the flagellum axoneme. In terms of biological role, microtubule inner protein (MIP) part of the dynein-decorated doublet microtubules (DMTs) in cilia axoneme, which is required for motile cilia beating. This Mus musculus (Mouse) protein is Cilia- and flagella- associated protein 210 (Cfap210).